Reading from the N-terminus, the 456-residue chain is Phosphomethylpyrimidine synthase (456 aa).

Substrate contacts are provided by residues asparagine 80, methionine 109, tyrosine 139, histidine 175, 195–197 (SRG), 236–239 (DSLR), and glutamate 275. Histidine 279 contributes to the Zn(2+) binding site. Substrate is bound at residue tyrosine 302. Histidine 343 is a Zn(2+) binding site. Residues cysteine 423, cysteine 426, and cysteine 431 each contribute to the [4Fe-4S] cluster site.

Belongs to the ThiC family. [4Fe-4S] cluster is required as a cofactor.

It catalyses the reaction 5-amino-1-(5-phospho-beta-D-ribosyl)imidazole + S-adenosyl-L-methionine = 4-amino-2-methyl-5-(phosphooxymethyl)pyrimidine + CO + 5'-deoxyadenosine + formate + L-methionine + 3 H(+). The protein operates within cofactor biosynthesis; thiamine diphosphate biosynthesis. Functionally, catalyzes the synthesis of the hydroxymethylpyrimidine phosphate (HMP-P) moiety of thiamine from aminoimidazole ribotide (AIR) in a radical S-adenosyl-L-methionine (SAM)-dependent reaction. The sequence is that of Phosphomethylpyrimidine synthase from Prochlorococcus marinus (strain MIT 9215).